A 256-amino-acid polypeptide reads, in one-letter code: Adenylate kinase (256 aa).

45–50 is a binding site for ATP; it reads GAGKGT. Residues 67-96 are NMP; sequence ATGDLLRQQVAMGTDLGKQAKKIMDQGALV. AMP contacts are provided by residues Thr-68, Arg-73, 94–96, 123–126, and Gln-130; these read ALV and GFPR. The segment at 164-201 is LID; sequence GRLIHPGSGRSYHKIFSPPKQPMKDDITGEPLVQRSDD. Residues Arg-165 and 174–175 each bind ATP; that span reads SY. AMP contacts are provided by Arg-198 and Arg-209. ATP is bound at residue Gln-237.

The protein belongs to the adenylate kinase family. AK2 subfamily. Monomer.

The protein resides in the cytoplasm. The protein localises to the cytosol. It is found in the mitochondrion intermembrane space. The catalysed reaction is AMP + ATP = 2 ADP. Its function is as follows. Catalyzes the reversible transfer of the terminal phosphate group between ATP and AMP. Plays an important role in cellular energy homeostasis and in adenine nucleotide metabolism. Adenylate kinase activity is critical for regulation of the phosphate utilization and the AMP de novo biosynthesis pathways. This is Adenylate kinase from Malassezia globosa (strain ATCC MYA-4612 / CBS 7966) (Dandruff-associated fungus).